A 234-amino-acid polypeptide reads, in one-letter code: MGAQWKVKHKEAAANAKGKIFGKLVKEITIAARNGADTATNAHLRLVVEQAKKASMPKETLDRAIKKGAGLLGETVQYHRVTYEGFAPHQVPLIVECVTDNINRTVAEIRVAFRKGQLGASGSVAWDFNHVGMIEASPDTPDADPEMAAIEAGAQDFEAGEEGATLFLTDPTDLDAVQKALPEQGFTVLSAKLGYQPKNPVSGLSDEQMAEVEAFLEGLDNHDDVQDMFVGLAG.

Belongs to the TACO1 family.

The protein localises to the cytoplasm. This chain is Probable transcriptional regulatory protein Pfl01_3677, found in Pseudomonas fluorescens (strain Pf0-1).